Reading from the N-terminus, the 191-residue chain is Elongation factor P (191 aa).

It belongs to the elongation factor P family.

The protein resides in the cytoplasm. The protein operates within protein biosynthesis; polypeptide chain elongation. Involved in peptide bond synthesis. Stimulates efficient translation and peptide-bond synthesis on native or reconstituted 70S ribosomes in vitro. Probably functions indirectly by altering the affinity of the ribosome for aminoacyl-tRNA, thus increasing their reactivity as acceptors for peptidyl transferase. The protein is Elongation factor P of Bartonella henselae (strain ATCC 49882 / DSM 28221 / CCUG 30454 / Houston 1) (Rochalimaea henselae).